The following is a 281-amino-acid chain: RNA polymerase sigma factor RpoH (281 aa).

The interval 52-121 (LILSHLRFVI…IHEYVLRNWR (70 aa)) is sigma-70 factor domain-2. The short motif at 76–79 (DLIQ) is the Interaction with polymerase core subunit RpoC element. Residues 226-277 (ALQSLDARSQDIIKARWLDDNKATLHDLAAKYNVSAERIRQLETNALKKLKS) form a sigma-70 factor domain-4 region. A DNA-binding region (H-T-H motif) is located at residues 250-269 (LHDLAAKYNVSAERIRQLET).

Belongs to the sigma-70 factor family. RpoH subfamily. In terms of assembly, interacts with the RNA polymerase core enzyme.

The protein resides in the cytoplasm. Sigma factors are initiation factors that promote the attachment of RNA polymerase to specific initiation sites and are then released. This sigma factor is involved in regulation of expression of heat shock genes. The protein is RNA polymerase sigma factor RpoH of Haemophilus influenzae (strain ATCC 51907 / DSM 11121 / KW20 / Rd).